The following is a 327-amino-acid chain: Undecaprenyl-phosphate 4-deoxy-4-formamido-L-arabinose transferase (327 aa).

Helical transmembrane passes span 235 to 255 (LLSL…VLLV) and 270 to 290 (VFTL…GMGL).

This sequence belongs to the glycosyltransferase 2 family.

It is found in the cell inner membrane. The enzyme catalyses UDP-4-deoxy-4-formamido-beta-L-arabinose + di-trans,octa-cis-undecaprenyl phosphate = 4-deoxy-4-formamido-alpha-L-arabinopyranosyl di-trans,octa-cis-undecaprenyl phosphate + UDP. The protein operates within glycolipid biosynthesis; 4-amino-4-deoxy-alpha-L-arabinose undecaprenyl phosphate biosynthesis; 4-amino-4-deoxy-alpha-L-arabinose undecaprenyl phosphate from UDP-4-deoxy-4-formamido-beta-L-arabinose and undecaprenyl phosphate: step 1/2. Its pathway is bacterial outer membrane biogenesis; lipopolysaccharide biosynthesis. Functionally, catalyzes the transfer of 4-deoxy-4-formamido-L-arabinose from UDP to undecaprenyl phosphate. The modified arabinose is attached to lipid A and is required for resistance to polymyxin and cationic antimicrobial peptides. This chain is Undecaprenyl-phosphate 4-deoxy-4-formamido-L-arabinose transferase, found in Yersinia pseudotuberculosis serotype IB (strain PB1/+).